A 342-amino-acid chain; its full sequence is Cathepsin B-like cysteine proteinase (342 aa).

The first 17 residues, 1 to 17 (MLKIAVYIVSLFTFLEA), serve as a signal peptide directing secretion. A propeptide spans 18–89 (HVTTRNNQRI…TVDHHDLNVE (72 aa)) (activation peptide). Cystine bridges form between C103/C132, C115/C159, C151/C217, C152/C155, C188/C221, and C196/C207. The active site involves C118. Active-site residues include H288 and N308.

The protein belongs to the peptidase C1 family. As to expression, intestine (gut).

Functionally, thiol protease. Has a role as a digestive enzyme. This chain is Cathepsin B-like cysteine proteinase (CATB), found in Schistosoma japonicum (Blood fluke).